The sequence spans 600 residues: L-galactono-1,4-lactone dehydrogenase, mitochondrial (600 aa).

Residues 1–25 constitute a mitochondrion transit peptide; it reads MLRSLLLRRSNARSLRPPFPPLRTL. The tract at residues 16–51 is disordered; the sequence is RPPFPPLRTLCTSGQTLTPAPPPPPPPPPPISSSAS. A propeptide spans 26–91 (removed in mature form); it reads CTSGQTLTPA…AKHKKAQIFR (66 aa). Residues 34-46 are compositionally biased toward pro residues; the sequence is PAPPPPPPPPPPI. Residues 58–74 form a helical membrane-spanning segment; that stretch reads YAGYAALALFSGAATYF. Residues 108-279 form the FAD-binding PCMH-type domain; sequence THEVQTRNFN…AEVTLQCVER (172 aa).

FAD is required as a cofactor.

The protein localises to the mitochondrion membrane. It catalyses the reaction L-galactono-1,4-lactone + 4 Fe(III)-[cytochrome c] = L-dehydroascorbate + 4 Fe(II)-[cytochrome c] + 5 H(+). The protein operates within cofactor biosynthesis; L-ascorbate biosynthesis. Inhibited by sulfhydryl-modifying agents such as N-ethylmaleimide, monoiodoacetic acid and p-hydroxymercuribenzoic acid. No inhibition by riboflavin and lycorine. Involved in the biosynthesis of ascorbic acid. Uses L-galactono-1,4-lactone as substrate, but not L-gulono-1,4-lactone, D-galactono-1,4-lactone, D-gulono-1,4-lactone, D-erythronic-1,4-lactone, D-xylonic-1,4-lactone, L-mannono-1,4-lactone, D-galactonic acid, D-glucuronic acid or D-gluconic acid. FAD, NAD, NADP and O(2) cannot act as electron acceptor. This Brassica oleracea (Wild cabbage) protein is L-galactono-1,4-lactone dehydrogenase, mitochondrial.